Consider the following 390-residue polypeptide: 8-demethyl-8-(2-methoxy-alpha-L-rhamnosyl)-tetracenomycin-C 3'-O-methyltransferase (390 aa).

Residues 202–208 (ELGIGGY), serine 217, aspartate 234, 252–253 (SQ), and aspartate 275 each bind S-adenosyl-L-methionine. A Mg(2+)-binding site is contributed by aspartate 275. Catalysis depends on histidine 278, which acts as the Proton acceptor. Mg(2+) is bound by residues glutamate 303 and aspartate 304.

Belongs to the methyltransferase OleY/MycE family. It depends on Mg(2+) as a cofactor.

The catalysed reaction is 8-demethyl-8-(2-O-methyl-alpha-L-rhamnosyl)-tetracenomycin C + S-adenosyl-L-methionine = 8-demethyl-8-(2,3-di-O-methyl-alpha-L-rhamnosyl)-tetracenomycin C + S-adenosyl-L-homocysteine + H(+). Its pathway is antibiotic biosynthesis. Functionally, O-methyltransferase involved in the biosynthesis of the permethylated L-rhamnose moiety of elloramycin, an antitumor polyketide. Mediates the methylation of the hydroxy groups at the 3'-position after the sugar moiety has been attached to the aglycon. The sequence is that of 8-demethyl-8-(2-methoxy-alpha-L-rhamnosyl)-tetracenomycin-C 3'-O-methyltransferase from Streptomyces olivaceus.